The sequence spans 149 residues: 3-dehydroquinate dehydratase (149 aa).

The active-site Proton acceptor is Tyr-23. Asn-75, His-81, and Asp-88 together coordinate substrate. Catalysis depends on His-101, which acts as the Proton donor. Residues 102-103 (MS) and Arg-112 each bind substrate.

Belongs to the type-II 3-dehydroquinase family. In terms of assembly, homododecamer.

The enzyme catalyses 3-dehydroquinate = 3-dehydroshikimate + H2O. Its pathway is metabolic intermediate biosynthesis; chorismate biosynthesis; chorismate from D-erythrose 4-phosphate and phosphoenolpyruvate: step 3/7. In terms of biological role, catalyzes a trans-dehydration via an enolate intermediate. This Pelobacter propionicus (strain DSM 2379 / NBRC 103807 / OttBd1) protein is 3-dehydroquinate dehydratase.